The sequence spans 157 residues: Transcription elongation factor GreA (157 aa).

Positions Met-1–Val-75 form a coiled coil.

It belongs to the GreA/GreB family.

Necessary for efficient RNA polymerase transcription elongation past template-encoded arresting sites. The arresting sites in DNA have the property of trapping a certain fraction of elongating RNA polymerases that pass through, resulting in locked ternary complexes. Cleavage of the nascent transcript by cleavage factors such as GreA or GreB allows the resumption of elongation from the new 3'terminus. GreA releases sequences of 2 to 3 nucleotides. The protein is Transcription elongation factor GreA of Mycoplasma mycoides subsp. mycoides SC (strain CCUG 32753 / NCTC 10114 / PG1).